The chain runs to 185 residues: 4-nitrophenol 4-monooxygenase/4-nitrocatechol 2-monooxygenase, reductase component (185 aa).

It belongs to the non-flavoprotein flavin reductase family. The 4-NP/4-NCA monooxygenase is composed of an oxygenase component NpcA and a reductase component NpcB.

The catalysed reaction is 4-nitrophenol + NADH + O2 + H(+) = 4-nitrocatechol + NAD(+) + H2O. The enzyme catalyses 4-nitrocatechol + NADPH + O2 = 2-hydroxy-1,4-benzoquinone + nitrite + NADP(+) + H2O. It carries out the reaction 4-nitrocatechol + NADH + O2 = 2-hydroxy-1,4-benzoquinone + nitrite + NAD(+) + H2O. The protein operates within aromatic compound metabolism. It functions in the pathway xenobiotic degradation. Inhibited by methimazole. Functionally, involved in the degradation of para-nitrophenol (4-NP). Catalyzes both the initial hydroxylation of 4-NP to produce 4-nitrocatechol (4-NCA) and the subsequent oxidative release of the nitro group from 4-NCA to produce 2-hydroxy-1,4-benzoquinone. It can also use 4-nitroresorcinol as substrate with a rate of nitrite release similar to that observed with the two physiological substrates, 4-PN and 4-NCA. This is 4-nitrophenol 4-monooxygenase/4-nitrocatechol 2-monooxygenase, reductase component (npcB) from Rhodococcus opacus (Nocardia opaca).